Here is a 138-residue protein sequence, read N- to C-terminus: uncharacterized protein (138 aa).

3 consecutive transmembrane segments (helical) span residues 17–37 (LIVSTIYIVLFFAILNLTVFF), 43–63 (INLILKNSCVVSFVVVWLLVC), and 117–137 (FWWMNFSLYLLGSLISIVVSL).

The protein localises to the cell membrane. This is an uncharacterized protein from Mycoplasma pneumoniae (strain ATCC 29342 / M129 / Subtype 1) (Mycoplasmoides pneumoniae).